We begin with the raw amino-acid sequence, 211 residues long: Acyl-homoserine-lactone synthase (211 aa).

The protein belongs to the autoinducer synthase family.

It carries out the reaction a fatty acyl-[ACP] + S-adenosyl-L-methionine = an N-acyl-L-homoserine lactone + S-methyl-5'-thioadenosine + holo-[ACP] + H(+). Its function is as follows. Required for the synthesis of OHHL (N-(3-oxohexanoyl)-L-homoserine lactone), an autoinducer molecule which binds to TraR and thus acts in the control of conjugal transfer. This is Acyl-homoserine-lactone synthase (traI) from Agrobacterium fabrum (strain C58 / ATCC 33970) (Agrobacterium tumefaciens (strain C58)).